Reading from the N-terminus, the 232-residue chain is RNA chaperone ProQ (232 aa).

Residues 105–182 (EAKARVQAQR…REEQHTPVSD (78 aa)) form a disordered region. Positions 117–136 (QQAKKREAAAAAGEKEDAPR) are enriched in basic and acidic residues. Residues 137 to 146 (RERKPRPTTP) are compositionally biased toward basic residues. The span at 147 to 177 (RRKEGAERKPRAQKPVEKAPKTVKAPREEQH) shows a compositional bias: basic and acidic residues.

It belongs to the ProQ family.

The protein resides in the cytoplasm. In terms of biological role, RNA chaperone with significant RNA binding, RNA strand exchange and RNA duplexing activities. May regulate ProP activity through an RNA-based, post-transcriptional mechanism. The sequence is that of RNA chaperone ProQ from Escherichia coli (strain ATCC 8739 / DSM 1576 / NBRC 3972 / NCIMB 8545 / WDCM 00012 / Crooks).